Reading from the N-terminus, the 134-residue chain is Gastrin-releasing peptide (134 aa).

The signal sequence occupies residues 1–23 (MRSREVSLVLLALVLCPAPRGSA). Position 50 is a methionine amide (Met50). The propeptide occupies 54–134 (SVAESPQLRE…QREGGNPQLY (81 aa)). Positions 98–134 (PPRWEPLSIHQPAWDSKDVSNFKDSGSQREGGNPQLY) are disordered. A compositionally biased stretch (polar residues) spans 119–134 (FKDSGSQREGGNPQLY).

It belongs to the bombesin/neuromedin-B/ranatensin family.

Its subcellular location is the secreted. The protein localises to the cytoplasmic vesicle. It localises to the secretory vesicle lumen. The protein resides in the cell projection. It is found in the neuron projection. Functionally, stimulates the release of gastrin and other gastrointestinal hormones. Contributes to the perception of prurient stimuli and to the transmission of itch signals in the spinal cord that promote scratching behavior. Contributes primarily to nonhistaminergic itch sensation. In one study, shown to act in the amygdala as part of an inhibitory network which inhibits memory specifically related to learned fear. In another study, shown to act on vasoactive intestinal peptide (VIP)-expressing cells in the auditory cortex, most likely via extrasynaptic diffusion from local and long-range sources, to mediate disinhibition of glutamatergic cells via VIP cell-specific GRPR signaling which leads to enhanced auditory fear memories. Contributes to the regulation of food intake. Inhibits voltage-gated sodium channels but enhances voltage-gated potassium channels in hippocampal neurons. Induces sighing by acting directly on the pre-Botzinger complex, a cluster of several thousand neurons in the ventrolateral medulla responsible for inspiration during respiratory activity. Its function is as follows. Induces an itch response through activation of receptors present on mast cells, triggering mast cell degranulation. In Ovis aries (Sheep), this protein is Gastrin-releasing peptide (GRP).